The following is a 142-amino-acid chain: gSG7 salivary protein (142 aa).

The N-terminal stretch at 1-26 (MAARMTIMLPLAVALICLLQTEPGMA) is a signal peptide. Intrachain disulfides connect Cys-84–Cys-139 and Cys-107–Cys-117.

Its subcellular location is the secreted. Functionally, salivary protein that moderately inhibits the alternative pathway for complement system activation in the host. The chain is gSG7 salivary protein from Anopheles darlingi (Mosquito).